Here is a 512-residue protein sequence, read N- to C-terminus: 2,3-bisphosphoglycerate-independent phosphoglycerate mutase (512 aa).

Positions 12 and 62 each coordinate Mn(2+). The Phosphoserine intermediate role is filled by S62. Substrate-binding positions include H123, 154-155 (RD), R181, R187, 253-256 (RPDR), and K336. Mn(2+)-binding residues include D403, H407, D444, H445, and H462.

This sequence belongs to the BPG-independent phosphoglycerate mutase family. In terms of assembly, monomer. The cofactor is Mn(2+).

It catalyses the reaction (2R)-2-phosphoglycerate = (2R)-3-phosphoglycerate. It functions in the pathway carbohydrate degradation; glycolysis; pyruvate from D-glyceraldehyde 3-phosphate: step 3/5. Functionally, catalyzes the interconversion of 2-phosphoglycerate and 3-phosphoglycerate. The chain is 2,3-bisphosphoglycerate-independent phosphoglycerate mutase from Onion yellows phytoplasma (strain OY-M).